A 176-amino-acid chain; its full sequence is RNA pyrophosphohydrolase (176 aa).

A Nudix hydrolase domain is found at 6 to 149; it reads GYRPNVGIVI…KRDVYRRVMK (144 aa). The Nudix box signature appears at 38–59; it reads GGINPGESAEQAMYRELFEEVG.

It belongs to the Nudix hydrolase family. RppH subfamily. A divalent metal cation serves as cofactor.

In terms of biological role, accelerates the degradation of transcripts by removing pyrophosphate from the 5'-end of triphosphorylated RNA, leading to a more labile monophosphorylated state that can stimulate subsequent ribonuclease cleavage. In Salmonella paratyphi C (strain RKS4594), this protein is RNA pyrophosphohydrolase.